An 838-amino-acid polypeptide reads, in one-letter code: Histidine biosynthesis trifunctional protein (838 aa).

The tract at residues 1 to 271 (MIFPILPVIS…MVEPRTGYGF (271 aa)) is phosphoribosyl-AMP cyclohydrolase. The phosphoribosyl-ATP pyrophosphohydrolase stretch occupies residues 272-360 (CHRETKFTCF…VYFAMVWCIK (89 aa)). The tract at residues 361–838 (HGVRLADIEK…IRMERMAETK (478 aa)) is histidinol dehydrogenase. Residues Gln660 and His663 each contribute to the Zn(2+) site. Catalysis depends on residues Glu729 and His730. 2 residues coordinate Zn(2+): Asp764 and His823.

This sequence in the C-terminal section; belongs to the histidinol dehydrogenase family. The cofactor is Zn(2+).

It carries out the reaction 1-(5-phospho-beta-D-ribosyl)-5'-AMP + H2O = 1-(5-phospho-beta-D-ribosyl)-5-[(5-phospho-beta-D-ribosylamino)methylideneamino]imidazole-4-carboxamide. The catalysed reaction is 1-(5-phospho-beta-D-ribosyl)-ATP + H2O = 1-(5-phospho-beta-D-ribosyl)-5'-AMP + diphosphate + H(+). It catalyses the reaction L-histidinol + 2 NAD(+) + H2O = L-histidine + 2 NADH + 3 H(+). The protein operates within amino-acid biosynthesis; L-histidine biosynthesis; L-histidine from 5-phospho-alpha-D-ribose 1-diphosphate: step 2/9. It functions in the pathway amino-acid biosynthesis; L-histidine biosynthesis; L-histidine from 5-phospho-alpha-D-ribose 1-diphosphate: step 3/9. It participates in amino-acid biosynthesis; L-histidine biosynthesis; L-histidine from 5-phospho-alpha-D-ribose 1-diphosphate: step 9/9. This Candida albicans (Yeast) protein is Histidine biosynthesis trifunctional protein (HIS4).